The sequence spans 225 residues: Ribulose-phosphate 3-epimerase (225 aa).

A substrate-binding site is contributed by Ser9. A divalent metal cation contacts are provided by His34, Asp36, and His68. Asp36 acts as the Proton acceptor in catalysis. Substrate-binding positions include His68, 144–147 (GFGG), 177–179 (DGG), and 199–200 (GS). Asp177 contributes to the a divalent metal cation binding site. Catalysis depends on Asp177, which acts as the Proton donor.

Belongs to the ribulose-phosphate 3-epimerase family. It depends on a divalent metal cation as a cofactor.

It catalyses the reaction D-ribulose 5-phosphate = D-xylulose 5-phosphate. It participates in carbohydrate degradation. Its function is as follows. Catalyzes the reversible epimerization of D-ribulose 5-phosphate to D-xylulose 5-phosphate. In Escherichia coli O157:H7, this protein is Ribulose-phosphate 3-epimerase.